Reading from the N-terminus, the 689-residue chain is Glycine--tRNA ligase beta subunit (689 aa).

Belongs to the class-II aminoacyl-tRNA synthetase family. Tetramer of two alpha and two beta subunits.

The protein resides in the cytoplasm. The enzyme catalyses tRNA(Gly) + glycine + ATP = glycyl-tRNA(Gly) + AMP + diphosphate. The protein is Glycine--tRNA ligase beta subunit of Dictyoglomus turgidum (strain DSM 6724 / Z-1310).